The primary structure comprises 235 residues: 7-cyano-7-deazaguanine synthase (235 aa).

Residue 12-22 (FSGGQDSTACL) participates in ATP binding. Zn(2+) is bound by residues Cys200, Cys215, Cys218, and Cys221.

Belongs to the QueC family. Zn(2+) is required as a cofactor.

The catalysed reaction is 7-carboxy-7-deazaguanine + NH4(+) + ATP = 7-cyano-7-deazaguanine + ADP + phosphate + H2O + H(+). Its pathway is purine metabolism; 7-cyano-7-deazaguanine biosynthesis. Its function is as follows. Catalyzes the ATP-dependent conversion of 7-carboxy-7-deazaguanine (CDG) to 7-cyano-7-deazaguanine (preQ(0)). This chain is 7-cyano-7-deazaguanine synthase, found in Methylibium petroleiphilum (strain ATCC BAA-1232 / LMG 22953 / PM1).